A 182-amino-acid chain; its full sequence is Dephospho-CoA kinase (182 aa).

The region spanning 4–182 (VVAITGGIGS…IINNDHKIMT (179 aa)) is the DPCK domain. 12–17 (GSGKTT) contributes to the ATP binding site.

It belongs to the CoaE family.

It is found in the cytoplasm. The enzyme catalyses 3'-dephospho-CoA + ATP = ADP + CoA + H(+). The protein operates within cofactor biosynthesis; coenzyme A biosynthesis; CoA from (R)-pantothenate: step 5/5. Catalyzes the phosphorylation of the 3'-hydroxyl group of dephosphocoenzyme A to form coenzyme A. This is Dephospho-CoA kinase from Aliivibrio fischeri (strain ATCC 700601 / ES114) (Vibrio fischeri).